The primary structure comprises 276 residues: NADPH-dependent 7-cyano-7-deazaguanine reductase (276 aa).

83-85 contacts substrate; that stretch reads IES. Residue 85–86 participates in NADPH binding; sequence SK. Cys-184 functions as the Thioimide intermediate in the catalytic mechanism. Asp-191 serves as the catalytic Proton donor. 223–224 lines the substrate pocket; it reads HE. NADPH is bound at residue 252–253; that stretch reads RG.

Belongs to the GTP cyclohydrolase I family. QueF type 2 subfamily. In terms of assembly, homodimer.

The protein localises to the cytoplasm. The enzyme catalyses 7-aminomethyl-7-carbaguanine + 2 NADP(+) = 7-cyano-7-deazaguanine + 2 NADPH + 3 H(+). It functions in the pathway tRNA modification; tRNA-queuosine biosynthesis. In terms of biological role, catalyzes the NADPH-dependent reduction of 7-cyano-7-deazaguanine (preQ0) to 7-aminomethyl-7-deazaguanine (preQ1). The sequence is that of NADPH-dependent 7-cyano-7-deazaguanine reductase from Pseudomonas fluorescens (strain Pf0-1).